The chain runs to 483 residues: ATP-dependent protease ATPase subunit HslU (483 aa).

ATP-binding positions include V18 and 60–65 (GVGKTE). Composition is skewed to low complexity over residues 136-147 (LPGGAPQPAPAQ) and 171-181 (AQADASQASPP). Residues 136 to 212 (LPGGAPQPAP…HGGKLDDREV (77 aa)) are disordered. Over residues 182 to 191 (TGTGSAPDSR) the composition is skewed to polar residues. Residues 192–209 (SSTREKLRTLWHGGKLDD) are compositionally biased toward basic and acidic residues. Residues D296, E361, and R433 each contribute to the ATP site.

The protein belongs to the ClpX chaperone family. HslU subfamily. A double ring-shaped homohexamer of HslV is capped on each side by a ring-shaped HslU homohexamer. The assembly of the HslU/HslV complex is dependent on binding of ATP.

It is found in the cytoplasm. Its function is as follows. ATPase subunit of a proteasome-like degradation complex; this subunit has chaperone activity. The binding of ATP and its subsequent hydrolysis by HslU are essential for unfolding of protein substrates subsequently hydrolyzed by HslV. HslU recognizes the N-terminal part of its protein substrates and unfolds these before they are guided to HslV for hydrolysis. This chain is ATP-dependent protease ATPase subunit HslU, found in Nitratidesulfovibrio vulgaris (strain DSM 19637 / Miyazaki F) (Desulfovibrio vulgaris).